A 313-amino-acid chain; its full sequence is Meiotically up-regulated gene 100 protein, mitochondrial (313 aa).

A run of 2 helical transmembrane segments spans residues 147-167 and 178-198; these read VFDY…YTAG and SGFI…TLTF.

It localises to the mitochondrion inner membrane. In terms of biological role, has a role in meiosis. In Schizosaccharomyces pombe (strain 972 / ATCC 24843) (Fission yeast), this protein is Meiotically up-regulated gene 100 protein, mitochondrial (mug100).